Consider the following 474-residue polypeptide: Gamma-aminobutyric acid receptor subunit beta-1 (474 aa).

The signal sequence occupies residues 1–25 (MWTVQNRESLGLLSFPVMVAMVCCA). Residues 26–245 (HSSNEPSNMS…SFRLKRNIGY (220 aa)) lie on the Extracellular side of the membrane. N-linked (GlcNAc...) asparagine glycans are attached at residues N33 and N105. Y122 provides a ligand contact to histamine. The cysteines at positions 161 and 175 are disulfide-linked. N-linked (GlcNAc...) asparagine glycosylation occurs at N174. Histamine-binding positions include 181–182 (SY) and T227. Y182 and T227 together coordinate 4-aminobutanoate. 3 consecutive transmembrane segments (helical) span residues 246–267 (FILQ…SFWI), 271–293 (ASAA…STHL), and 305–327 (AIDI…YAFV). Residues 328 to 451 (NYIFFGKGPQ…DLTDVNSIDK (124 aa)) lie on the Cytoplasmic side of the membrane. Residues 452 to 473 (WSRMFFPITFSLFNVVYWLYYV) form a helical membrane-spanning segment.

Belongs to the ligand-gated ion channel (TC 1.A.9) family. Gamma-aminobutyric acid receptor (TC 1.A.9.5) subfamily. GABRB1 sub-subfamily. In terms of assembly, heteropentamer, formed by a combination of alpha (GABRA1-6), beta (GABRB1-3), gamma (GABRG1-3), delta (GABRD), epsilon (GABRE), rho (GABRR1-3), pi (GABRP) and theta (GABRQ) chains, each subunit exhibiting distinct physiological and pharmacological properties. Binds UBQLN1.

Its subcellular location is the postsynaptic cell membrane. It is found in the cell membrane. It catalyses the reaction chloride(in) = chloride(out). Its activity is regulated as follows. Potentiated by histamine. Functionally, beta subunit of the heteropentameric ligand-gated chloride channel gated by gamma-aminobutyric acid (GABA), a major inhibitory neurotransmitter in the brain. GABA-gated chloride channels, also named GABA(A) receptors (GABAAR), consist of five subunits arranged around a central pore and contain GABA active binding site(s) located at the alpha and beta subunit interface(s). When activated by GABA, GABAARs selectively allow the flow of chloride anions across the cell membrane down their electrochemical gradient. Chloride influx into the postsynaptic neuron following GABAAR opening decreases the neuron ability to generate a new action potential, thereby reducing nerve transmission. Beta-containing GABAARs can simultaneously bind GABA and histamine where histamine binds at the interface of two neighboring beta subunits, which may be involved in the regulation of sleep and wakefulness. The protein is Gamma-aminobutyric acid receptor subunit beta-1 of Rattus norvegicus (Rat).